Here is a 430-residue protein sequence, read N- to C-terminus: Enolase (430 aa).

(2R)-2-phosphoglycerate is bound at residue glutamine 163. The active-site Proton donor is the glutamate 205. Mg(2+) contacts are provided by aspartate 242, glutamate 285, and aspartate 312. (2R)-2-phosphoglycerate contacts are provided by lysine 337, arginine 366, serine 367, and lysine 388. The Proton acceptor role is filled by lysine 337.

Belongs to the enolase family. Mg(2+) is required as a cofactor.

The protein localises to the cytoplasm. The protein resides in the secreted. It is found in the cell surface. It catalyses the reaction (2R)-2-phosphoglycerate = phosphoenolpyruvate + H2O. Its pathway is carbohydrate degradation; glycolysis; pyruvate from D-glyceraldehyde 3-phosphate: step 4/5. Functionally, catalyzes the reversible conversion of 2-phosphoglycerate (2-PG) into phosphoenolpyruvate (PEP). It is essential for the degradation of carbohydrates via glycolysis. The protein is Enolase of Bifidobacterium animalis subsp. lactis (strain AD011).